Here is a 246-residue protein sequence, read N- to C-terminus: Transcription factor A, mitochondrial (246 aa).

A mitochondrion-targeting transit peptide spans 1-42 (MALLRGVWGVLSALGKSGADLCAVCGSRLRSPFSFAYVPRWF). Residues 50–118 (PKKPMTSYVR…VYKEEVNRIQ (69 aa)) constitute a DNA-binding region (HMG box 1). Phosphoserine; by PKA occurs at positions 56 and 61. A Phosphothreonine modification is found at Thr-122. A DNA-binding region (HMG box 2) is located at residues 155–219 (PKRPRSAYNI…RYYNEMKSWE (65 aa)). Ser-160 is modified (phosphoserine; by PKA). Phosphoserine occurs at positions 193 and 195.

As to quaternary structure, monomer; binds DNA as a monomer. Homodimer. Component of the mitochondrial transcription initiation complex, composed at least of TFB2M, TFAM and POLRMT. In this complex TFAM recruits POLRMT to the promoter whereas TFB2M induces structural changes in POLRMT to enable promoter opening and trapping of the DNA non-template strand. Upon metabolic stress, forms a complex composed of FOXO3, SIRT3, TFAM and POLRMT. Interacts with TFB1M and TFB2M. Interacts with CLPX; this enhances DNA-binding. Phosphorylation by PKA within the HMG box 1 impairs DNA binding and promotes degradation by the AAA+ Lon protease.

It localises to the mitochondrion. Its subcellular location is the mitochondrion matrix. It is found in the mitochondrion nucleoid. Its function is as follows. Binds to the mitochondrial light strand promoter and functions in mitochondrial transcription regulation. Component of the mitochondrial transcription initiation complex, composed at least of TFB2M, TFAM and POLRMT that is required for basal transcription of mitochondrial DNA. In this complex, TFAM recruits POLRMT to a specific promoter whereas TFB2M induces structural changes in POLRMT to enable promoter opening and trapping of the DNA non-template strand. Required for accurate and efficient promoter recognition by the mitochondrial RNA polymerase. Promotes transcription initiation from the HSP1 and the light strand promoter by binding immediately upstream of transcriptional start sites. Is able to unwind DNA. Bends the mitochondrial light strand promoter DNA into a U-turn shape via its HMG boxes. Required for maintenance of normal levels of mitochondrial DNA. May play a role in organizing and compacting mitochondrial DNA. This chain is Transcription factor A, mitochondrial, found in Sus scrofa (Pig).